Here is a 770-residue protein sequence, read N- to C-terminus: tRNA(Met) cytidine acetyltransferase TmcA 2 (770 aa).

The ATP site is built by Q209 and R390. Positions 458-608 (MIMLDGIHHK…YPVVVIRPIS (151 aa)) constitute an N-acetyltransferase domain. 533–535 (IAV) is an acetyl-CoA binding site.

This sequence belongs to the TmcA family.

Its subcellular location is the cytoplasm. It carries out the reaction cytidine(34) in elongator tRNA(Met) + acetyl-CoA + ATP + H2O = N(4)-acetylcytidine(34) in elongator tRNA(Met) + ADP + phosphate + CoA + H(+). The enzyme catalyses a cytidine in RNA + acetyl-CoA + ATP + H2O = an N(4)-acetylcytidine in RNA + ADP + phosphate + CoA + H(+). The catalysed reaction is a cytidine in tRNA + acetyl-CoA + ATP + H2O = an N(4)-acetylcytidine in tRNA + ADP + phosphate + CoA + H(+). It catalyses the reaction a cytidine in mRNA + acetyl-CoA + ATP + H2O = an N(4)-acetylcytidine in mRNA + ADP + phosphate + CoA + H(+). In terms of biological role, catalyzes the formation of N(4)-acetylcytidine (ac(4)C) at the wobble position of tRNA(Met), by using acetyl-CoA as an acetyl donor and ATP (or GTP). Functionally, catalyzes the formation of 41 N(4)-acetylcytidine (ac(4)C) sites in RNA, almost always on the middle C of a CCG motif. Modifications are found mostly in tRNA, with small amounts found in rRNA and mRNA. This chain is tRNA(Met) cytidine acetyltransferase TmcA 2, found in Saccharolobus solfataricus (strain ATCC 35092 / DSM 1617 / JCM 11322 / P2) (Sulfolobus solfataricus).